Consider the following 679-residue polypeptide: Glycine--tRNA ligase beta subunit (679 aa).

It belongs to the class-II aminoacyl-tRNA synthetase family. Tetramer of two alpha and two beta subunits.

The protein resides in the cytoplasm. It catalyses the reaction tRNA(Gly) + glycine + ATP = glycyl-tRNA(Gly) + AMP + diphosphate. This chain is Glycine--tRNA ligase beta subunit, found in Streptococcus pyogenes serotype M3 (strain ATCC BAA-595 / MGAS315).